A 711-amino-acid chain; its full sequence is Origin recognition complex subunit 3 (711 aa).

Phosphoserine is present on residues Ser-23 and Ser-516.

The protein belongs to the ORC3 family. Component of ORC, a complex composed of at least 6 subunits: ORC1, ORC2, ORC3, ORC4, ORC5 and ORC6. ORC is regulated in a cell-cycle dependent manner. It is sequentially assembled at the exit from anaphase of mitosis and disassembled as cells enter S phase. In terms of processing, multi-mono-ubiquitinated by OBI1; ubiquitination is important for efficient DNA replication origin site activation. Ubiquitination levels are low in mitotic and early G1-phAse cells and are induced in late G1-/early S-phase, peaking in S-phase and decrease toward the end of the cell cycle.

It localises to the nucleus. Its subcellular location is the chromosome. Component of the origin recognition complex (ORC) that binds origins of replication. DNA-binding is ATP-dependent. The specific DNA sequences that define origins of replication have not been identified yet. ORC is required to assemble the pre-replication complex necessary to initiate DNA replication. Binds histone H3 and H4 trimethylation marks H3K9me3, H3K27me3 and H4K20me3. The polypeptide is Origin recognition complex subunit 3 (ORC3) (Homo sapiens (Human)).